We begin with the raw amino-acid sequence, 501 residues long: Glycerol kinase (501 aa).

Thr-12 contributes to the ADP binding site. ATP contacts are provided by Thr-12, Thr-13, and Ser-14. Thr-12 provides a ligand contact to sn-glycerol 3-phosphate. Arg-16 contributes to the ADP binding site. Sn-glycerol 3-phosphate is bound by residues Arg-82, Glu-83, Tyr-135, and Asp-244. Glycerol-binding residues include Arg-82, Glu-83, Tyr-135, Asp-244, and Gln-245. 4 residues coordinate ADP: Thr-266, Gly-309, Gly-409, and Asn-413. ATP contacts are provided by Thr-266, Gly-309, and Gly-409.

This sequence belongs to the FGGY kinase family.

The catalysed reaction is glycerol + ATP = sn-glycerol 3-phosphate + ADP + H(+). It functions in the pathway polyol metabolism; glycerol degradation via glycerol kinase pathway; sn-glycerol 3-phosphate from glycerol: step 1/1. Inhibited by fructose 1,6-bisphosphate (FBP). Key enzyme in the regulation of glycerol uptake and metabolism. Catalyzes the phosphorylation of glycerol to yield sn-glycerol 3-phosphate. In Coxiella burnetii (strain Dugway 5J108-111), this protein is Glycerol kinase.